The primary structure comprises 275 residues: Anthracycline biosynthesis protein DnrV (275 aa).

2 VOC domains span residues 8-136 (APAW…VWRK) and 150-263 (SVGW…VVEL).

It functions in the pathway antibiotic biosynthesis; daunorubicin biosynthesis. It participates in antibiotic biosynthesis; carminomycin biosynthesis. Involved in the biosynthesis of the anthracyclines carminomycin and daunorubicin (daunomycin) which are aromatic polyketide antibiotics that exhibit high cytotoxicity and are widely applied in the chemotherapy of a variety of cancers. In vivo, it acts jointly with DoxA in the conversion of 13-deoxycarminomycin and 13-deoxydaunorubicin to yield carminomycin and daunorubicin, respectively. In vitro, it also acts jointly with DoxA in the C-14 hydroxylation of daunorubicin to form doxorubicin, although this strain is not a doxorubicin producer. In Streptomyces peucetius, this protein is Anthracycline biosynthesis protein DnrV (dnrV).